Consider the following 185-residue polypeptide: Thioredoxin F2, chloroplastic (185 aa).

One can recognise a Thioredoxin domain in the interval 59–184 (RRIGSCVVRC…LLAAIEAARS (126 aa)). Active-site nucleophile residues include C109 and C112. C109 and C112 are oxidised to a cystine. At C136 the chain carries S-glutathionyl cysteine; transient.

The protein belongs to the thioredoxin family. Plant F-type subfamily. Post-translationally, glutathionylation at Cys-136 decreases its ability to be reduced by ferredoxin-thioredoxin reductase and reduces its efficiency in activating target chloroplastic enzymes.

The protein resides in the plastid. The protein localises to the chloroplast stroma. In terms of biological role, probable thiol-disulfide oxidoreductase involved in the redox regulation of enzymes of both reductive pentose phosphate pathway (Calvin-Benson cycle) and oxidative pentose phosphate pathway. In Arabidopsis thaliana (Mouse-ear cress), this protein is Thioredoxin F2, chloroplastic.